Consider the following 651-residue polypeptide: Peptidoglycan D,D-transpeptidase MrdA (651 aa).

The helical transmembrane segment at 30–50 threads the bilayer; it reads LVAFLGILLLTGVLFTNIYQL. Ser338 functions as the Acyl-ester intermediate in the catalytic mechanism.

The protein belongs to the transpeptidase family. MrdA subfamily.

It is found in the cell inner membrane. The catalysed reaction is Preferential cleavage: (Ac)2-L-Lys-D-Ala-|-D-Ala. Also transpeptidation of peptidyl-alanyl moieties that are N-acyl substituents of D-alanine.. Its pathway is cell wall biogenesis; peptidoglycan biosynthesis. Catalyzes cross-linking of the peptidoglycan cell wall. This chain is Peptidoglycan D,D-transpeptidase MrdA, found in Haemophilus influenzae (strain ATCC 51907 / DSM 11121 / KW20 / Rd).